Reading from the N-terminus, the 168-residue chain is Coiled-coil domain-containing protein 200 (168 aa).

The stretch at 16–50 (LDRRRWLMAQQQQELQQKEQELKNHQEEEQQSEEK) forms a coiled coil. The disordered stretch occupies residues 23–168 (MAQQQQELQQ…LKSTNYIQQW (146 aa)). Basic and acidic residues predominate over residues 31 to 52 (QQKEQELKNHQEEEQQSEEKLQ). Residues 70–82 (SQEQPQPSQQQPS) are compositionally biased toward low complexity. 2 stretches are compositionally biased toward pro residues: residues 83 to 94 (VQPPSQPPPQPS) and 104 to 117 (GPQP…PQPT). Polar residues-rich tracts occupy residues 124-138 (RCTQ…QDSQ) and 145-168 (PCQS…IQQW).

The chain is Coiled-coil domain-containing protein 200 from Homo sapiens (Human).